The primary structure comprises 250 residues: uncharacterized protein (250 aa).

3 residues coordinate a divalent metal cation: Glu97, Glu99, and Asp128.

This sequence belongs to the FAH family.

This is an uncharacterized protein from Archaeoglobus fulgidus (strain ATCC 49558 / DSM 4304 / JCM 9628 / NBRC 100126 / VC-16).